A 353-amino-acid chain; its full sequence is Mitochondrial distribution and morphology protein 10 (353 aa).

Belongs to the MDM10 family. Component of the ER-mitochondria encounter structure (ERMES) or MDM complex, composed of MMM1, MDM10, MDM12 and MDM34. Associates with the mitochondrial outer membrane sorting assembly machinery SAM(core) complex.

The protein resides in the mitochondrion outer membrane. Component of the ERMES/MDM complex, which serves as a molecular tether to connect the endoplasmic reticulum and mitochondria. Components of this complex are involved in the control of mitochondrial shape and protein biogenesis and may function in phospholipid exchange. MDM10 is involved in the late assembly steps of the general translocase of the mitochondrial outer membrane (TOM complex). Functions in the TOM40-specific route of the assembly of outer membrane beta-barrel proteins, including the association of TOM40 with the receptor TOM22 and small TOM proteins. Can associate with the SAM(core) complex as well as the MDM12-MMM1 complex, both involved in late steps of the major beta-barrel assembly pathway, that is responsible for biogenesis of all outer membrane beta-barrel proteins. May act as a switch that shuttles between both complexes and channels precursor proteins into the TOM40-specific pathway. Plays a role in mitochondrial morphology and in the inheritance of mitochondria. This Yarrowia lipolytica (strain CLIB 122 / E 150) (Yeast) protein is Mitochondrial distribution and morphology protein 10.